Here is a 505-residue protein sequence, read N- to C-terminus: MDLLLLEKTLLGSFVAVLVAILVSKLRGKRFKLPPGPLPVPVFGNWLQVGDDLNHRNLTDLAKKFGDIFLLRMGQRNLVVVSSPDLSKEVLHTQGVEFGSRTRNVVFDIFTGKGQDMVFTVYGEHWRKMRRIMTVPFFTNKVVQQYRYGWEEEAAQVVEDVKKNPEAATNGIVLRRRLQLMMYNNMYRIMFDRRFESEDDPLFNKLKALNGERSRLAQSFDYNYGDFIPILRPFLRGYLKICQEVKERRLQLFKDYFVDERKKLASTKNMSNEGLKCAIDHILDAQKKGEINEDNVLYIVENINVAAIETTLWSIEWGIAELVNHPEIQKKLRHELDTLLGPGHQITEPDTYKLPYLNAVVKETLRLRMAIPLLVPHMNLHDAKLGGFDIPAESKILVNAWWLANNPAHWKNPEEFRPERFLEEGAKVEANGNDFRYLPFGVGRRSCPGIILALPILGITLGRLVQNFELLPPPGQSKIDTSEKGGQFSLHILKHSTIVAKPRSF.

Residues 3-23 (LLLLEKTLLGSFVAVLVAILV) traverse the membrane as a helical segment. (E)-cinnamate contacts are provided by residues 213 to 218 (RSRLAQ) and Ala-306. Cys-447 contributes to the heme binding site.

Belongs to the cytochrome P450 family. It depends on heme as a cofactor.

It localises to the membrane. It catalyses the reaction (E)-cinnamate + reduced [NADPH--hemoprotein reductase] + O2 = (E)-4-coumarate + oxidized [NADPH--hemoprotein reductase] + H2O + H(+). It participates in phenylpropanoid metabolism; trans-4-coumarate biosynthesis; trans-4-coumarate from trans-cinnamate: step 1/1. In terms of biological role, catalyzes the first oxidative step of the phenylpropanoid pathway in higher plants by transforming trans-cinnamate into p-coumarate. The compounds formed by this pathway are essential components for lignification, pollination, and defense against ultraviolet light, predators and pathogens. This Populus kitakamiensis (Aspen) protein is Trans-cinnamate 4-monooxygenase (CYP73A16).